A 239-amino-acid chain; its full sequence is 7-cyano-7-deazaguanine synthase (239 aa).

Position 8 to 18 (8 to 18) interacts with ATP; the sequence is FSGGLDSTASL. Positions 194, 209, 212, and 215 each coordinate Zn(2+).

The protein belongs to the QueC family.

The enzyme catalyses 7-carboxy-7-deazaguanine + NH4(+) + ATP = 7-cyano-7-deazaguanine + ADP + phosphate + H2O + H(+). It participates in purine metabolism; 7-cyano-7-deazaguanine biosynthesis. Its function is as follows. Catalyzes the ATP-dependent conversion of 7-carboxy-7-deazaguanine (CDG) to 7-cyano-7-deazaguanine (preQ(0)). This is 7-cyano-7-deazaguanine synthase from Pyrococcus abyssi (strain GE5 / Orsay).